A 64-amino-acid polypeptide reads, in one-letter code: Translation machinery-associated protein 7 homolog (64 aa).

A disordered region spans residues 1–64; that stretch reads MSGRQGGKAK…GGGIKKSGKK (64 aa). Residues 21–50 are a coiled coil; that stretch reads DLSEEDVEFKKKQQEEAKKIKEMAAKAGQR. Basic and acidic residues predominate over residues 28-44; it reads EFKKKQQEEAKKIKEMA. Positions 53 to 64 are enriched in gly residues; that stretch reads LLGGGIKKSGKK.

This sequence belongs to the TMA7 family.

The sequence is that of Translation machinery-associated protein 7 homolog from Caenorhabditis briggsae.